Here is a 796-residue protein sequence, read N- to C-terminus: Serine/threonine-protein kinase ATG1 (796 aa).

One can recognise a Protein kinase domain in the interval 9 to 304; that stretch reads YVVGAEIGRG…FQEFFNDPVI (296 aa). Residues 15-23 and Lys-38 contribute to the ATP site; that span reads IGRGSFANV. The active-site Proton acceptor is Asp-155. The segment covering 360–370 has biased composition (acidic residues); it reads LEEEDEEEDQD. Disordered regions lie at residues 360 to 382, 389 to 408, and 450 to 480; these read LEEEDEEEDQDQLPSKNDNIQHM, LLNKTTQKQTEVQSQPRREL, and PYTRRYSSSSRSSSTGSNQRRPSFGDRKVPI. Residues 389 to 403 are compositionally biased toward polar residues; the sequence is LLNKTTQKQTEVQSQ. Over residues 453-470 the composition is skewed to low complexity; that stretch reads RRYSSSSRSSSTGSNQRR.

This sequence belongs to the protein kinase superfamily. Ser/Thr protein kinase family. APG1/unc-51/ULK1 subfamily. Homodimer. Forms a ternary complex with ATG13 and ATG17.

The protein localises to the cytoplasm. It is found in the preautophagosomal structure membrane. The enzyme catalyses L-seryl-[protein] + ATP = O-phospho-L-seryl-[protein] + ADP + H(+). It catalyses the reaction L-threonyl-[protein] + ATP = O-phospho-L-threonyl-[protein] + ADP + H(+). Serine/threonine protein kinase involved in the cytoplasm to vacuole transport (Cvt) and found to be essential in autophagy, where it is required for the formation of autophagosomes. Involved in the clearance of protein aggregates which cannot be efficiently cleared by the proteasome. Required for selective autophagic degradation of the nucleus (nucleophagy) as well as for mitophagy which contributes to regulate mitochondrial quantity and quality by eliminating the mitochondria to a basal level to fulfill cellular energy requirements and preventing excess ROS production. Also involved in endoplasmic reticulum-specific autophagic process, in selective removal of ER-associated degradation (ERAD) substrates. Plays a key role in ATG9 and ATG23 cycling through the pre-autophagosomal structure and is necessary to promote ATG18 binding to ATG9 through phosphorylation of ATG9. Catalyzes phosphorylation of ATG4, decreasing the interaction between ATG4 and ATG8 and impairing deconjugation of PE-conjugated forms of ATG8. This chain is Serine/threonine-protein kinase ATG1, found in Komagataella pastoris (Yeast).